The chain runs to 150 residues: Lipoprotein signal peptidase (150 aa).

3 helical membrane-spanning segments follow: residues 8–28 (FYAL…LAHA), 58–78 (GFSW…GWFL), and 81–101 (TTGS…NVFD). Active-site residues include Asp116 and Asp132. The helical transmembrane segment at 126 to 146 (VVFNIADLFILAGVFGTFLFL) threads the bilayer.

The protein belongs to the peptidase A8 family.

Its subcellular location is the cell membrane. It carries out the reaction Release of signal peptides from bacterial membrane prolipoproteins. Hydrolyzes -Xaa-Yaa-Zaa-|-(S,diacylglyceryl)Cys-, in which Xaa is hydrophobic (preferably Leu), and Yaa (Ala or Ser) and Zaa (Gly or Ala) have small, neutral side chains.. The protein operates within protein modification; lipoprotein biosynthesis (signal peptide cleavage). This protein specifically catalyzes the removal of signal peptides from prolipoproteins. This Tropheryma whipplei (strain Twist) (Whipple's bacillus) protein is Lipoprotein signal peptidase.